A 74-amino-acid chain; its full sequence is Sodium channel neurotoxin MeuNaTxalpha-6 (74 aa).

Residues 1–7 form the signal peptide; sequence LMTGVES. The region spanning 9–73 is the LCN-type CS-alpha/beta domain; that stretch reads RDAYIAKPHN…VPIRIPGKCH (65 aa). 4 disulfides stabilise this stretch: Cys19/Cys72, Cys23/Cys45, Cys31/Cys55, and Cys35/Cys57. Arg74 is a propeptide (removed by a carboxypeptidase).

Belongs to the long (4 C-C) scorpion toxin superfamily. Sodium channel inhibitor family. Alpha subfamily. Expressed by the venom gland.

It is found in the secreted. Alpha toxins bind voltage-independently at site-3 of sodium channels (Nav) and inhibit the inactivation of the activated channels, thereby blocking neuronal transmission. In Mesobuthus eupeus (Lesser Asian scorpion), this protein is Sodium channel neurotoxin MeuNaTxalpha-6.